An 850-amino-acid polypeptide reads, in one-letter code: Polyhomeotic-like protein 2 (850 aa).

5 disordered regions span residues 1 to 79, 233 to 314, 335 to 386, 402 to 436, and 528 to 553; these read MENE…QYLQ, QQTP…RAVP, LPQP…DHAL, THVH…PPQR, and MTSG…KPPQ. Residues 15–32 show a composition bias toward low complexity; sequence SVTTNTSGTNSSSGCISS. Residues 33-56 form an interaction with BMI1 region; sequence SGGGGGSGGRPTAPQISVYSGIPD. Positions 343–352 are enriched in low complexity; sequence PQPQFVAQQQ. 2 stretches are compositionally biased toward polar residues: residues 368 to 380 and 402 to 425; these read LASV…LQSS and THVH…SQNG. The segment covering 529–543 has biased composition (low complexity); that stretch reads TSGNGNSASSIAGTA. Positions 550-579 match the HD1 motif; it reads KPPQAIVKPQILTHVIEGFVIQEGAEPFPV. Residues Lys-590 and Lys-592 each participate in a glycyl lysine isopeptide (Lys-Gly) (interchain with G-Cter in SUMO2) cross-link. The tract at residues 597–624 is disordered; it reads FLPEKPPQQDHTTTTDSEMEEPYLQESK. At Thr-611 the chain carries Phosphothreonine. Ser-613 carries the post-translational modification Phosphoserine. A Glycyl lysine isopeptide (Lys-Gly) (interchain with G-Cter in SUMO2) cross-link involves residue Lys-624. The FCS-type zinc finger occupies 625–659; it reads EEGTPLKLKCELCGRVDFAYKFKRSKRFCSMACAK. Zn(2+) is bound by residues Cys-634, Cys-637, Cys-653, and Cys-657. 2 disordered regions span residues 676-712 and 725-764; these read RSKL…SGTV and SQED…LDLP. Residue Lys-694 forms a Glycyl lysine isopeptide (Lys-Gly) (interchain with G-Cter in SUMO2) linkage. A compositionally biased stretch (polar residues) spans 696–712; that stretch reads SLPTLTKDTKKQPSGTV. Ser-743 is subject to Phosphoserine. In terms of domain architecture, SAM spans 786 to 850; it reads WNVEDVYEFI…YARISMLKDS (65 aa). Lys-839 is covalently cross-linked (Glycyl lysine isopeptide (Lys-Gly) (interchain with G-Cter in SUMO2)).

Component of a PRC1-like complex. Interacts with CBX4. Interacts with BMI1, PCGF2, PHC1 and RNF2. Interacts with CHTOP. Interacts with the N-terminal region of the SP1 transcription factor and with MAPKAPK2. Interacts with SAMD7. Interacts with SAMD11. In terms of tissue distribution, isoform 2 is ubiquitously expressed in embryos and adult tissues at much higher level than isoform 1.

It is found in the nucleus. Component of a Polycomb group (PcG) multiprotein PRC1-like complex, a complex class required to maintain the transcriptionally repressive state of many genes, including Hox genes, throughout development. PcG PRC1 complex acts via chromatin remodeling and modification of histones; it mediates monoubiquitination of histone H2A 'Lys-119', rendering chromatin heritably changed in its expressibility. This is Polyhomeotic-like protein 2 (Phc2) from Mus musculus (Mouse).